The sequence spans 101 residues: NAD(P)H-quinone oxidoreductase subunit 4L, chloroplastic (101 aa).

A run of 3 helical transmembrane segments spans residues 2-22, 32-52, and 61-81; these read MLEH…YGLI, MCLE…SDLF, and IFSI…LAII.

The protein belongs to the complex I subunit 4L family. NDH is composed of at least 16 different subunits, 5 of which are encoded in the nucleus.

The protein resides in the plastid. It localises to the chloroplast thylakoid membrane. The enzyme catalyses a plastoquinone + NADH + (n+1) H(+)(in) = a plastoquinol + NAD(+) + n H(+)(out). The catalysed reaction is a plastoquinone + NADPH + (n+1) H(+)(in) = a plastoquinol + NADP(+) + n H(+)(out). Functionally, NDH shuttles electrons from NAD(P)H:plastoquinone, via FMN and iron-sulfur (Fe-S) centers, to quinones in the photosynthetic chain and possibly in a chloroplast respiratory chain. The immediate electron acceptor for the enzyme in this species is believed to be plastoquinone. Couples the redox reaction to proton translocation, and thus conserves the redox energy in a proton gradient. In Ranunculus macranthus (Large buttercup), this protein is NAD(P)H-quinone oxidoreductase subunit 4L, chloroplastic.